Here is a 382-residue protein sequence, read N- to C-terminus: Chaperone protein DnaJ (382 aa).

A J domain is found at 5-70 (DYYEVLGVSR…DKKAAYDRYG (66 aa)). The segment at 141-219 (GVQKTINVPA…CHGAGRVEKE (79 aa)) adopts a CR-type zinc-finger fold. The Zn(2+) site is built by Cys154, Cys157, Cys171, Cys174, Cys193, Cys196, Cys207, and Cys210. 4 CXXCXGXG motif repeats span residues 154–161 (CDSCKGTG), 171–178 (CPTCSGMG), 193–200 (CPTCNGMG), and 207–214 (CKSCHGAG).

This sequence belongs to the DnaJ family. Homodimer. It depends on Zn(2+) as a cofactor.

The protein resides in the cytoplasm. Functionally, participates actively in the response to hyperosmotic and heat shock by preventing the aggregation of stress-denatured proteins and by disaggregating proteins, also in an autonomous, DnaK-independent fashion. Unfolded proteins bind initially to DnaJ; upon interaction with the DnaJ-bound protein, DnaK hydrolyzes its bound ATP, resulting in the formation of a stable complex. GrpE releases ADP from DnaK; ATP binding to DnaK triggers the release of the substrate protein, thus completing the reaction cycle. Several rounds of ATP-dependent interactions between DnaJ, DnaK and GrpE are required for fully efficient folding. Also involved, together with DnaK and GrpE, in the DNA replication of plasmids through activation of initiation proteins. The sequence is that of Chaperone protein DnaJ from Cereibacter sphaeroides (strain ATCC 17025 / ATH 2.4.3) (Rhodobacter sphaeroides).